A 149-amino-acid polypeptide reads, in one-letter code: Large ribosomal subunit protein uL30 (149 aa).

This sequence belongs to the universal ribosomal protein uL30 family. Part of the 50S ribosomal subunit.

In Methanopyrus kandleri (strain AV19 / DSM 6324 / JCM 9639 / NBRC 100938), this protein is Large ribosomal subunit protein uL30.